A 151-amino-acid chain; its full sequence is Regulatory protein RecX (151 aa).

Belongs to the RecX family.

Its subcellular location is the cytoplasm. Its function is as follows. Modulates RecA activity. The protein is Regulatory protein RecX of Haemophilus ducreyi (strain 35000HP / ATCC 700724).